The primary structure comprises 669 residues: Elongation factor G 2 (669 aa).

A tr-type G domain is found at 1-276 (MGIRNIGIMA…SIVDYLPSPF (276 aa)). GTP contacts are provided by residues 10-17 (AHIDAGKT), 74-78 (DTPGH), and 128-131 (NKMD).

It belongs to the TRAFAC class translation factor GTPase superfamily. Classic translation factor GTPase family. EF-G/EF-2 subfamily.

It localises to the cytoplasm. In terms of biological role, catalyzes the GTP-dependent ribosomal translocation step during translation elongation. During this step, the ribosome changes from the pre-translocational (PRE) to the post-translocational (POST) state as the newly formed A-site-bound peptidyl-tRNA and P-site-bound deacylated tRNA move to the P and E sites, respectively. Catalyzes the coordinated movement of the two tRNA molecules, the mRNA and conformational changes in the ribosome. The protein is Elongation factor G 2 (fusA2) of Borreliella afzelii (strain PKo) (Borrelia afzelii).